The following is a 490-amino-acid chain: Hippocampus abundant transcript 1 protein (490 aa).

The residue at position 1 (M1) is an N-acetylmethionine. Over M1–A40 the chain is Extracellular. A glycan (N-linked (GlcNAc...) asparagine) is linked at N12. A helical transmembrane segment spans residues V41 to V61. Residues L62 to N74 are Cytoplasmic-facing. Residues G75–L95 form a helical membrane-spanning segment. The Extracellular portion of the chain corresponds to S96–S103. A helical membrane pass occupies residues F104–W124. The Cytoplasmic segment spans residues W125 to Y126. Residues F127–V147 traverse the membrane as a helical segment. The Extracellular segment spans residues A148–Y160. A helical membrane pass occupies residues G161–L181. Over G182 to S188 the chain is Cytoplasmic. The chain crosses the membrane as a helical span at residues L189–V209. Topologically, residues P210–D243 are extracellular. A helical transmembrane segment spans residues S244–Y264. Topologically, residues S265–A284 are cytoplasmic. Residues F285–M305 traverse the membrane as a helical segment. The Extracellular portion of the chain corresponds to R306 to T313. Residues I314–P334 form a helical membrane-spanning segment. The Cytoplasmic portion of the chain corresponds to W335 to M337. A helical transmembrane segment spans residues W338 to V358. Over S359–G379 the chain is Extracellular. A helical membrane pass occupies residues L380–L400. Topologically, residues K401 to P427 are cytoplasmic. The chain crosses the membrane as a helical span at residues G428–I448. Topologically, residues P449–V490 are extracellular. An N-linked (GlcNAc...) asparagine glycan is attached at N453. Positions C465–V490 are disordered.

It belongs to the major facilitator superfamily.

Its subcellular location is the membrane. This chain is Hippocampus abundant transcript 1 protein, found in Homo sapiens (Human).